We begin with the raw amino-acid sequence, 211 residues long: Ribosomal RNA small subunit methyltransferase G (211 aa).

Residues G74, L79, 125–126 (AE), and R140 each bind S-adenosyl-L-methionine.

It belongs to the methyltransferase superfamily. RNA methyltransferase RsmG family.

It is found in the cytoplasm. Its function is as follows. Specifically methylates the N7 position of guanine in position 518 of 16S rRNA. In Clavibacter michiganensis subsp. michiganensis (strain NCPPB 382), this protein is Ribosomal RNA small subunit methyltransferase G.